The sequence spans 180 residues: Nucleoside triphosphate/diphosphate phosphatase (180 aa).

R26 (proton donor) is an active-site residue. Residues N90, D106, D108, D110, D123, and E126 each coordinate Mg(2+).

Belongs to the Ntdp family. Mg(2+) is required as a cofactor.

It carries out the reaction a ribonucleoside 5'-triphosphate + H2O = a ribonucleoside 5'-diphosphate + phosphate + H(+). It catalyses the reaction a ribonucleoside 5'-diphosphate + H2O = a ribonucleoside 5'-phosphate + phosphate + H(+). Has nucleoside phosphatase activity towards nucleoside triphosphates and nucleoside diphosphates. The chain is Nucleoside triphosphate/diphosphate phosphatase from Staphylococcus epidermidis (strain ATCC 35984 / DSM 28319 / BCRC 17069 / CCUG 31568 / BM 3577 / RP62A).